The primary structure comprises 212 residues: uncharacterized protein (212 aa).

Residues 1–88 are disordered; that stretch reads MAEEQKIALE…PAPAKPASAS (88 aa). The residue at position 13 (Ser13) is a Phosphoserine. A compositionally biased stretch (pro residues) spans 23–41; the sequence is ADTPAPAPAEIPAPAPAPT. Residues 45-54 show a composition bias toward basic and acidic residues; the sequence is VTKDVAEEKI.

This sequence belongs to the remorin family.

It is found in the cell membrane. This is an uncharacterized protein from Arabidopsis thaliana (Mouse-ear cress).